Here is a 226-residue protein sequence, read N- to C-terminus: Ribose-5-phosphate isomerase A (226 aa).

Substrate-binding positions include Thr-33–Thr-36, Asp-86–Asp-89, and Lys-99–Gly-102. The Proton acceptor role is filled by Glu-108. Lys-126 serves as a coordination point for substrate.

Belongs to the ribose 5-phosphate isomerase family. As to quaternary structure, homodimer.

It carries out the reaction aldehydo-D-ribose 5-phosphate = D-ribulose 5-phosphate. The protein operates within carbohydrate degradation; pentose phosphate pathway; D-ribose 5-phosphate from D-ribulose 5-phosphate (non-oxidative stage): step 1/1. Its function is as follows. Catalyzes the reversible conversion of ribose-5-phosphate to ribulose 5-phosphate. This chain is Ribose-5-phosphate isomerase A, found in Bordetella bronchiseptica (strain ATCC BAA-588 / NCTC 13252 / RB50) (Alcaligenes bronchisepticus).